The following is a 710-amino-acid chain: Adenylosuccinate synthetase (710 aa).

Residues 1 to 54 (MPVRRYGGRYNSSSPGVSNALNPSRTAGWPLSPSPATGSKPASTHHDPVPQEAY) form a disordered region. Residues 10 to 25 (YNSSSPGVSNALNPSR) show a composition bias toward polar residues. The segment covering 44-54 (THHDPVPQEAY) has biased composition (basic and acidic residues). Residues 180-186 (GDEGKGK) and 210-212 (GHT) each bind GTP. Asp-181 (proton acceptor) is an active-site residue. Residues Asp-181 and Gly-210 each coordinate Mg(2+). Residues 181-184 (DEGK), 208-211 (NAGH), Thr-295, Lys-309, Gln-421, Thr-437, and Lys-567 contribute to the IMP site. The active-site Proton donor is the His-211. Residue 563 to 569 (AVTKKPR) participates in substrate binding. GTP is bound by residues Arg-569 and 697-699 (GNG).

The protein belongs to the adenylosuccinate synthetase family. Homodimer. Mg(2+) is required as a cofactor.

The protein resides in the cytoplasm. It carries out the reaction IMP + L-aspartate + GTP = N(6)-(1,2-dicarboxyethyl)-AMP + GDP + phosphate + 2 H(+). The protein operates within purine metabolism; AMP biosynthesis via de novo pathway; AMP from IMP: step 1/2. In terms of biological role, plays an important role in the salvage pathway for purine nucleotide biosynthesis. Catalyzes the first committed step in the biosynthesis of AMP from IMP. The sequence is that of Adenylosuccinate synthetase from Leishmania major.